The following is a 460-amino-acid chain: T-box transcription factor TBX1 (460 aa).

2 disordered regions span residues 30 to 53 (LNTPGSYHLSPSPGDPYSHHESQF) and 67 to 99 (GSNSAQAPAQGDSGTSNCSSSSSSSTPNKTLVK). Over residues 67–84 (GSNSAQAPAQGDSGTSNC) the composition is skewed to polar residues. The T-box DNA-binding region spans 116–294 (LWDEFNQLGT…SNPFAKGFRD (179 aa)). Disordered regions lie at residues 317-355 (RTRNPMSSPPQQNGTEKEDSRREYDRDPSGNPLHSDPTH) and 376-400 (PLTAGPRSPPHELRLDGHPQPPDTL). Over residues 320–330 (NPMSSPPQQNG) the composition is skewed to polar residues. Residues 331 to 344 (TEKEDSRREYDRDP) are compositionally biased toward basic and acidic residues. The Nuclear localization signal motif lies at 418–429 (KTRPSPYPSPSI).

Binds DNA as a dimer. In terms of tissue distribution, expressed in the ear and mesendodermal components of pharyngeal arches.

The protein localises to the nucleus. Probable transcriptional regulator involved in developmental processes. Binds to the palindromic T site 5'-TTCACACCTAGGTGTGAA-3' DNA sequence. Is required for normal development of the pharyngeal arch arteries. Acts cell autonomously in the pharyngeal mesendoderm and influences the development of neural crest-derived cartilages secondarily. This is T-box transcription factor TBX1 (tbx1) from Danio rerio (Zebrafish).